Consider the following 441-residue polypeptide: Maltose-6'-phosphate glucosidase (441 aa).

NAD(+) is bound at residue 4 to 70 (FSILIAGGGS…PQIKFSYSTN (67 aa)). 2 residues coordinate substrate: arginine 93 and asparagine 147. Cysteine 169 provides a ligand contact to Mn(2+). Residue aspartate 170 is the Proton donor of the active site. Histidine 200 serves as a coordination point for Mn(2+). The active-site Proton acceptor is tyrosine 264. Residue arginine 284 coordinates substrate.

It belongs to the glycosyl hydrolase 4 family. Homotetramer. NAD(+) is required as a cofactor. The cofactor is Mn(2+). It depends on Fe(2+) as a cofactor. Requires Co(2+) as cofactor. Ni(2+) serves as cofactor.

It carries out the reaction alpha-maltose 6'-phosphate + H2O = D-glucose 6-phosphate + D-glucose. It functions in the pathway glycan degradation; maltose degradation. Functionally, hydrolyzes a wide variety of 6-phospho-alpha-D-glucosides including maltose-6'P, trehalose-6P and the 6'-phosphorylated derivatives of the five linkage-isomeric alpha-D-glucosyl-D-fructoses: trehalulose-6'P, turanose-6'P, maltulose-6'P, leucrose-6'P, and palatinose-6'P. However, sucrose-6P is not a substrate for MalH, and this enzyme also fails to hydrolyze beta-O-linked phosphorylated disaccharides such as cellobiose-6'P and gentobiose-6'P. In Fusobacterium mortiferum, this protein is Maltose-6'-phosphate glucosidase (malH).